We begin with the raw amino-acid sequence, 148 residues long: Large ribosomal subunit protein uL13 (148 aa).

The protein belongs to the universal ribosomal protein uL13 family. In terms of assembly, part of the 50S ribosomal subunit.

Functionally, this protein is one of the early assembly proteins of the 50S ribosomal subunit, although it is not seen to bind rRNA by itself. It is important during the early stages of 50S assembly. The protein is Large ribosomal subunit protein uL13 of Ureaplasma urealyticum serovar 10 (strain ATCC 33699 / Western).